Here is a 223-residue protein sequence, read N- to C-terminus: MOB-like protein phocein (223 aa).

The tract at residues 1–23 (MTAATENRTVRRNGPGTKRADWN) is disordered. C92, C97, H169, and H174 together coordinate Zn(2+).

It belongs to the MOB1/phocein family.

It is found in the cytoplasm. It localises to the perinuclear region. The protein resides in the membrane. Its subcellular location is the golgi apparatus. The protein localises to the golgi stack membrane. Its function is as follows. May play a role in membrane trafficking, specifically in membrane budding reactions. The chain is MOB-like protein phocein from Caenorhabditis elegans.